Consider the following 209-residue polypeptide: Dephospho-CoA kinase (209 aa).

The region spanning 13 to 209 (RIGLTGGIAT…AIEKVVVAEN (197 aa)) is the DPCK domain. 21–26 (ATGKST) lines the ATP pocket.

It belongs to the CoaE family.

It is found in the cytoplasm. The catalysed reaction is 3'-dephospho-CoA + ATP = ADP + CoA + H(+). It participates in cofactor biosynthesis; coenzyme A biosynthesis; CoA from (R)-pantothenate: step 5/5. Catalyzes the phosphorylation of the 3'-hydroxyl group of dephosphocoenzyme A to form coenzyme A. The sequence is that of Dephospho-CoA kinase from Synechococcus elongatus (strain ATCC 33912 / PCC 7942 / FACHB-805) (Anacystis nidulans R2).